Consider the following 322-residue polypeptide: Probable heme-iron transport system permease protein IsdF (322 aa).

The next 9 membrane-spanning stretches (helical) occupy residues 9–29 (LLFLCLLVILIATAYISFVTG), 61–81 (ILIALMVGAMLAVSGALLQAA), 89–109 (ANIIGVSSGALIMRALCMLFI), 114–134 (FYLPLLSFIGGLIPFLIIIVL), 143–163 (VSMILVGVALFVLLNGVLEIL), 179–199 (IWSDVYILAVSALLGLILTLL), 233–253 (VFLASATVAIVGQLAFLGIIV), 267–287 (VLIPFSTVIGAWLLLVADLLG), and 294–314 (LEIPANAILMIVGGPMLIYLI).

This sequence belongs to the binding-protein-dependent transport system permease family. FecCD subfamily.

It is found in the cell membrane. Its function is as follows. Part of the binding-protein-dependent transport system for heme-iron. Responsible for the translocation of the substrate across the membrane. This Staphylococcus aureus (strain bovine RF122 / ET3-1) protein is Probable heme-iron transport system permease protein IsdF (isdF).